A 136-amino-acid chain; its full sequence is MNSVLCSRAAGAVRALRLVGWASRSLHPPPRGRSPAQPADREEEDDDPNLPIQFSGSKATPIRWTVEHSLGKPQQRPWWKVLPLTLTLVALVVWCYQREESGMDLWLRQVLEEEDEEEPEGPPEELEAPALYGART.

The first 15 residues, 1–15, serve as a signal peptide directing secretion; the sequence is MNSVLCSRAAGAVRA. Topologically, residues 16 to 80 are mitochondrial matrix; it reads LRLVGWASRS…GKPQQRPWWK (65 aa). Residues 26–58 are disordered; the sequence is LHPPPRGRSPAQPADREEEDDDPNLPIQFSGSK. The helical transmembrane segment at 81-97 threads the bilayer; it reads VLPLTLTLVALVVWCYQ. Residues 98–136 lie on the Mitochondrial intermembrane side of the membrane; it reads REESGMDLWLRQVLEEEDEEEPEGPPEELEAPALYGART. Residues 112–127 show a composition bias toward acidic residues; sequence EEEDEEEPEGPPEELE. Positions 112-136 are disordered; sequence EEEDEEEPEGPPEELEAPALYGART.

It belongs to the UQCC4 family. Forms a complex, named COMB/coordinator of mitochondrial CYTB biogenesis, composed of UQCC1, UQCC2, UQCC4, UQCC5 and UQCC6; stabilizes nascent cytochrome b/MT-CYB and promotes its membrane insertion. Forms a complex, named COMA, composed of UQCC1, UQCC2 and UQCC4; activates MT-CYB translation. Forms a complex, named COMC, composed of UQCC1, UQCC2; UQCC3 and UQCC4; mediates MT-CYB hemylation and association with the first nuclear-encoded complex III subunit UQCRQ. Complexes COMA and COMB are bound to the mitochondrion inner membrane by UQCC4.

Its subcellular location is the mitochondrion inner membrane. In terms of biological role, required for the assembly and stability of the mitochondrial ubiquinol-cytochrome c reductase complex (complex III (CIII) or cytochrome b-c1 complex), a multisubunit transmembrane complex that is part of the mitochondrial electron transport chain (ETC) which drives oxidative phosphorylation. The sequence is that of Ubiquinol-cytochrome c reductase complex assembly factor 4 (Uqcc4) from Mus musculus (Mouse).